The following is a 452-amino-acid chain: MKETIVAQATAPGRGGIGILRVSGPLATEVAQAILGKCPKPRMADYLPFKDADGTILDQGIALYFKSPNSFTGEDVLELQGHGGQVVLDLLLKRILQIDGIRLARPGEFSEQAFLNDKFDLAQAEAIADLIDATSEQAARSALKSLQGEFSKKVNELVDSVIYLRTYVEASIDFPDEEIDFLADGKIEANLRSIINQLEDVRAEAKQGSILREGMKVVIAGRPNAGKSSLLNALAGREAAIVTDIAGTTRDVLREHIHIDGMPLHIIDTAGLRDATDEVERIGISRAWTEIEQADRIILMLDSSDPESVDLSKVRSEFLAKLPSTLPVTIVRNKIDLNGEQASESEQSGYQMISLSAQTHDGVKLLREHLKQAMGFQTGMEGGFLARRRHLDALDKAAEHLQIGLVQLTEFHAGELLAEELRLVQSYLSEITGQFTSDDLLGNIFSSFCIGK.

3 residues coordinate (6S)-5-formyl-5,6,7,8-tetrahydrofolate: R21, E78, and K118. Residues 214–375 (GMKVVIAGRP…LREHLKQAMG (162 aa)) enclose the TrmE-type G domain. N224 serves as a coordination point for K(+). GTP contacts are provided by residues 224–229 (NAGKSS), 243–249 (TDIAGTT), and 268–271 (DTAG). S228 provides a ligand contact to Mg(2+). Residues T243, I245, and T248 each contribute to the K(+) site. Residue T249 participates in Mg(2+) binding. K452 serves as a coordination point for (6S)-5-formyl-5,6,7,8-tetrahydrofolate.

It belongs to the TRAFAC class TrmE-Era-EngA-EngB-Septin-like GTPase superfamily. TrmE GTPase family. Homodimer. Heterotetramer of two MnmE and two MnmG subunits. K(+) serves as cofactor.

It localises to the cytoplasm. In terms of biological role, exhibits a very high intrinsic GTPase hydrolysis rate. Involved in the addition of a carboxymethylaminomethyl (cmnm) group at the wobble position (U34) of certain tRNAs, forming tRNA-cmnm(5)s(2)U34. This Haemophilus influenzae (strain PittGG) protein is tRNA modification GTPase MnmE.